The primary structure comprises 88 residues: Small ribosomal subunit protein bS18 (88 aa).

Residues M1–V22 form a disordered region.

This sequence belongs to the bacterial ribosomal protein bS18 family. Part of the 30S ribosomal subunit. Forms a tight heterodimer with protein bS6.

Functionally, binds as a heterodimer with protein bS6 to the central domain of the 16S rRNA, where it helps stabilize the platform of the 30S subunit. The protein is Small ribosomal subunit protein bS18 (rpsR) of Thermus thermophilus.